A 119-amino-acid polypeptide reads, in one-letter code: Large ribosomal subunit protein bL20 (119 aa).

Belongs to the bacterial ribosomal protein bL20 family.

Its function is as follows. Binds directly to 23S ribosomal RNA and is necessary for the in vitro assembly process of the 50S ribosomal subunit. It is not involved in the protein synthesizing functions of that subunit. The sequence is that of Large ribosomal subunit protein bL20 from Nitrosomonas europaea (strain ATCC 19718 / CIP 103999 / KCTC 2705 / NBRC 14298).